A 29-amino-acid chain; its full sequence is Cyclotide psyleio C (29 aa).

Positions 1-29 (GDLPVCGETCFGGTCNTPGCVCAWPVCTR) form a cross-link, cyclopeptide (Gly-Arg). Cystine bridges form between Cys6-Cys20, Cys10-Cys22, and Cys15-Cys27.

In terms of processing, this is a cyclic peptide.

Its function is as follows. Probably participates in a plant defense mechanism. This is Cyclotide psyleio C from Psychotria leiocarpa.